Reading from the N-terminus, the 210-residue chain is Thymidylate kinase (210 aa).

10–17 (GPEGAGKS) provides a ligand contact to ATP.

Belongs to the thymidylate kinase family.

It carries out the reaction dTMP + ATP = dTDP + ADP. In terms of biological role, phosphorylation of dTMP to form dTDP in both de novo and salvage pathways of dTTP synthesis. In Pseudomonas entomophila (strain L48), this protein is Thymidylate kinase.